A 475-amino-acid polypeptide reads, in one-letter code: ATP synthase subunit beta, chloroplastic (475 aa).

Position 155–162 (155–162) interacts with ATP; that stretch reads GGAGVGKT.

Belongs to the ATPase alpha/beta chains family. F-type ATPases have 2 components, CF(1) - the catalytic core - and CF(0) - the membrane proton channel. CF(1) has five subunits: alpha(3), beta(3), gamma(1), delta(1), epsilon(1). CF(0) has four main subunits: a(1), b(1), b'(1) and c(9-12).

It localises to the plastid. Its subcellular location is the chloroplast thylakoid membrane. It carries out the reaction ATP + H2O + 4 H(+)(in) = ADP + phosphate + 5 H(+)(out). In terms of biological role, produces ATP from ADP in the presence of a proton gradient across the membrane. The catalytic sites are hosted primarily by the beta subunits. The protein is ATP synthase subunit beta, chloroplastic of Pyropia yezoensis (Susabi-nori).